We begin with the raw amino-acid sequence, 498 residues long: ATP synthase subunit beta, chloroplastic (498 aa).

ATP is bound at residue 172–179; the sequence is GGAGVGKT.

This sequence belongs to the ATPase alpha/beta chains family. F-type ATPases have 2 components, CF(1) - the catalytic core - and CF(0) - the membrane proton channel. CF(1) has five subunits: alpha(3), beta(3), gamma(1), delta(1), epsilon(1). CF(0) has four main subunits: a(1), b(1), b'(1) and c(9-12).

The protein localises to the plastid. It localises to the chloroplast thylakoid membrane. It catalyses the reaction ATP + H2O + 4 H(+)(in) = ADP + phosphate + 5 H(+)(out). In terms of biological role, produces ATP from ADP in the presence of a proton gradient across the membrane. The catalytic sites are hosted primarily by the beta subunits. The sequence is that of ATP synthase subunit beta, chloroplastic from Elaeis oleifera (American oil palm).